The sequence spans 553 residues: Muellerian-inhibiting factor (553 aa).

The signal sequence occupies residues 1 to 22 (MQGPHLSLLLLLLATMGAVLQA). Positions 23 to 445 (DTVEELTNTR…GREGRGRAGR (423 aa)) are excised as a propeptide. N-linked (GlcNAc...) asparagine glycans are attached at residues Asn-325 and Asn-409. 3 disulfides stabilise this stretch: Cys-455/Cys-519, Cys-481/Cys-550, and Cys-485/Cys-552.

The protein belongs to the TGF-beta family. As to quaternary structure, homodimer; disulfide-linked. Post-translationally, preproprotein is proteolytically processed to generate N- and C-terminal cleavage products that homodimerize and associate to form a biologically active non-covalent complex. Binding of the non-covalent complex to AMHR2 induces dissociation of the pro-region from the mature C-terminal dimer. The N-terminal portion of the protein, despite having no intrinsic activity, has the role of amplifying the activity of the C-terminus. As to expression, mainly expressed in granulosa cells from preantral and small antral follicles.

Its subcellular location is the secreted. In terms of biological role, plays an important role in several reproductive functions. Induces Muellerian duct regression during male fetal sexual differentiation and plays a role in Leydig cell differentiation and function. In female acts as a negative regulator of the primordial to primary follicle transition and decreases FSH sensitivity of growing follicles. AMH signals by binding to a specific type-II receptor, AMHR2, that heterodimerizes with type-I receptors (ACVR1 and BMPR1A), and recruiting SMAD proteins that are translocated to the nucleus to regulate target gene expression. The chain is Muellerian-inhibiting factor (Amh) from Rattus norvegicus (Rat).